A 491-amino-acid polypeptide reads, in one-letter code: Aspartyl/glutamyl-tRNA(Asn/Gln) amidotransferase subunit B (491 aa).

It belongs to the GatB/GatE family. GatB subfamily. In terms of assembly, heterotrimer of A, B and C subunits.

The catalysed reaction is L-glutamyl-tRNA(Gln) + L-glutamine + ATP + H2O = L-glutaminyl-tRNA(Gln) + L-glutamate + ADP + phosphate + H(+). The enzyme catalyses L-aspartyl-tRNA(Asn) + L-glutamine + ATP + H2O = L-asparaginyl-tRNA(Asn) + L-glutamate + ADP + phosphate + 2 H(+). Its function is as follows. Allows the formation of correctly charged Asn-tRNA(Asn) or Gln-tRNA(Gln) through the transamidation of misacylated Asp-tRNA(Asn) or Glu-tRNA(Gln) in organisms which lack either or both of asparaginyl-tRNA or glutaminyl-tRNA synthetases. The reaction takes place in the presence of glutamine and ATP through an activated phospho-Asp-tRNA(Asn) or phospho-Glu-tRNA(Gln). This is Aspartyl/glutamyl-tRNA(Asn/Gln) amidotransferase subunit B from Parasynechococcus marenigrum (strain WH8102).